A 241-amino-acid chain; its full sequence is Ribonuclease PH (241 aa).

Residues Arg-89 and 127–129 each bind phosphate; that span reads GTR.

This sequence belongs to the RNase PH family. In terms of assembly, homohexameric ring arranged as a trimer of dimers.

The enzyme catalyses tRNA(n+1) + phosphate = tRNA(n) + a ribonucleoside 5'-diphosphate. Phosphorolytic 3'-5' exoribonuclease that plays an important role in tRNA 3'-end maturation. Removes nucleotide residues following the 3'-CCA terminus of tRNAs; can also add nucleotides to the ends of RNA molecules by using nucleoside diphosphates as substrates, but this may not be physiologically important. Probably plays a role in initiation of 16S rRNA degradation (leading to ribosome degradation) during starvation. The polypeptide is Ribonuclease PH (Xanthomonas euvesicatoria pv. vesicatoria (strain 85-10) (Xanthomonas campestris pv. vesicatoria)).